Reading from the N-terminus, the 410-residue chain is LIMR family protein SELMODRAFT_432208 (410 aa).

5 consecutive transmembrane segments (helical) span residues 30-50 (LWWA…IFFY), 67-87 (LWVV…YAVI), 129-149 (VTLM…LTTL), 156-176 (ICLD…NTII), and 179-199 (ILFM…LIFA). Positions 245–274 (RMFRKNVKKVQQELVFLEDDVEALNEAFPQ) form a coiled coil. Transmembrane regions (helical) follow at residues 288 to 308 (LVFG…IIVF) and 330 to 350 (GGLL…MSVI). The segment covering 389 to 400 (PSSAMDSSSWSA) has biased composition (low complexity). Positions 389–410 (PSSAMDSSSWSADRPCRPWPWP) are disordered.

It belongs to the LIMR family.

Its subcellular location is the membrane. In Selaginella moellendorffii (Spikemoss), this protein is LIMR family protein SELMODRAFT_432208.